Consider the following 475-residue polypeptide: Ribulose bisphosphate carboxylase large chain (475 aa).

Residues methionine 1–serine 2 constitute a propeptide that is removed on maturation. Proline 3 carries the post-translational modification N-acetylproline. Asparagine 123 and threonine 173 together coordinate substrate. Lysine 175 (proton acceptor) is an active-site residue. Lysine 177 is a substrate binding site. Residues lysine 201, aspartate 203, and glutamate 204 each coordinate Mg(2+). Lysine 201 carries the N6-carboxylysine modification. Histidine 294 acts as the Proton acceptor in catalysis. Residues arginine 295, histidine 327, and serine 379 each contribute to the substrate site.

The protein belongs to the RuBisCO large chain family. Type I subfamily. As to quaternary structure, heterohexadecamer of 8 large chains and 8 small chains; disulfide-linked. The disulfide link is formed within the large subunit homodimers. Requires Mg(2+) as cofactor. In terms of processing, the disulfide bond which can form in the large chain dimeric partners within the hexadecamer appears to be associated with oxidative stress and protein turnover.

It is found in the plastid. The protein localises to the chloroplast. The enzyme catalyses 2 (2R)-3-phosphoglycerate + 2 H(+) = D-ribulose 1,5-bisphosphate + CO2 + H2O. It catalyses the reaction D-ribulose 1,5-bisphosphate + O2 = 2-phosphoglycolate + (2R)-3-phosphoglycerate + 2 H(+). Its function is as follows. RuBisCO catalyzes two reactions: the carboxylation of D-ribulose 1,5-bisphosphate, the primary event in carbon dioxide fixation, as well as the oxidative fragmentation of the pentose substrate in the photorespiration process. Both reactions occur simultaneously and in competition at the same active site. The polypeptide is Ribulose bisphosphate carboxylase large chain (Gnetum parvifolium (Small-leaved jointfir)).